Reading from the N-terminus, the 344-residue chain is Autoinducer 2 import system permease protein LsrC (344 aa).

A run of 9 helical transmembrane segments spans residues 13-33, 38-58, 69-89, 90-110, 114-134, 155-175, 212-232, 251-271, and 283-303; these read FFAI…YFIL, MIFA…LVML, TVGL…GLAT, AIAF…LLVV, IPAI…MLLW, FIGV…GGWL, LNGM…GFVP, GISL…AFFL, and LPAW…LVLD. Residues 323 to 344 form a disordered region; it reads QPGNKGSKQVARFPERKSKEVA. The segment covering 335–344 has biased composition (basic and acidic residues); it reads FPERKSKEVA.

The protein belongs to the binding-protein-dependent transport system permease family. AraH/RbsC subfamily. In terms of assembly, the complex is composed of two ATP-binding proteins (LsrA), two transmembrane proteins (LsrC and LsrD) and a solute-binding protein (LsrB).

The protein resides in the cell inner membrane. Part of the ABC transporter complex LsrABCD involved in autoinducer 2 (AI-2) import. Probably responsible for the translocation of the substrate across the membrane. In Klebsiella pneumoniae subsp. pneumoniae (strain ATCC 700721 / MGH 78578), this protein is Autoinducer 2 import system permease protein LsrC (lsrC).